Consider the following 530-residue polypeptide: Autoinducer-2 kinase (530 aa).

This sequence belongs to the FGGY kinase family.

The protein localises to the cytoplasm. The enzyme catalyses (S)-4,5-dihydroxypentane-2,3-dione + ATP = (2S)-2-hydroxy-3,4-dioxopentyl phosphate + ADP + H(+). In terms of biological role, catalyzes the phosphorylation of autoinducer-2 (AI-2) to phospho-AI-2, which subsequently inactivates the transcriptional regulator LsrR and leads to the transcription of the lsr operon. Phosphorylates the ring-open form of (S)-4,5-dihydroxypentane-2,3-dione (DPD), which is the precursor to all AI-2 signaling molecules, at the C5 position. The sequence is that of Autoinducer-2 kinase from Escherichia coli (strain SMS-3-5 / SECEC).